Consider the following 94-residue polypeptide: Acylphosphatase (94 aa).

In terms of domain architecture, Acylphosphatase-like spans 8–94 (TLFIIVHGKV…GRRFKHFAQH (87 aa)). Catalysis depends on residues Arg-23 and Asn-41. The tract at residues 69–94 (PPAASVTELESRREDGGRRFKHFAQH) is disordered. Residues 77-86 (LESRREDGGR) show a composition bias toward basic and acidic residues.

The protein belongs to the acylphosphatase family.

It carries out the reaction an acyl phosphate + H2O = a carboxylate + phosphate + H(+). This is Acylphosphatase (acyP) from Bordetella avium (strain 197N).